The primary structure comprises 466 residues: Soluble pyridine nucleotide transhydrogenase (466 aa).

Residue 36 to 45 participates in FAD binding; the sequence is ERYHNVGGGC.

This sequence belongs to the class-I pyridine nucleotide-disulfide oxidoreductase family. FAD is required as a cofactor.

Its subcellular location is the cytoplasm. It catalyses the reaction NAD(+) + NADPH = NADH + NADP(+). In terms of biological role, conversion of NADPH, generated by peripheral catabolic pathways, to NADH, which can enter the respiratory chain for energy generation. The protein is Soluble pyridine nucleotide transhydrogenase of Klebsiella pneumoniae subsp. pneumoniae (strain ATCC 700721 / MGH 78578).